The primary structure comprises 433 residues: MLNFISKPVGCLKGEITVPGDKSISHRSIIFGAIAIGTSVIDGFLDGEDCIATLKAFQSMGVRIEGPDKQRVIIHGVGKYGLKQPQNIIDCVNSGTSMRLLAGLLAAQQFDSQLTGDESLLKRPMLRISRPLSQMGADVTTQDGKPPIVIKGGKKLNGIHYVMPEASAQVKSCLLLAGMYAEGQTKITENAVSRDHTERMLRTFSYPVQIQDGAIVIDRNGECHGTRLNIPGDISSAAFFIVAASITPGSDVLIRNVGINPTRTGIIHILTEMGADIRVLNQRAYGEEPVADLHIRYSQLKGIDIPASMVPLAIDEFPVIFIAAACAQGKTTLHGAKELRLKESDRIGAMVDGLNQLGVHAEGFDDGILIEGGSIQGGEVNSRGDHRIAMSFAIAGAVASAPVTIKNCANVATSFPSFVTTANMLHFQIEEYS.

Residues Lys22, Ser23, and Arg27 each coordinate 3-phosphoshikimate. A phosphoenolpyruvate-binding site is contributed by Lys22. Phosphoenolpyruvate is bound by residues Gly95 and Arg123. Residues Ser167, Gln169, Asp315, and Lys342 each contribute to the 3-phosphoshikimate site. Residue Gln169 coordinates phosphoenolpyruvate. Residue Asp315 is the Proton acceptor of the active site. 2 residues coordinate phosphoenolpyruvate: Arg346 and Arg387.

The protein belongs to the EPSP synthase family. Monomer.

The protein resides in the cytoplasm. It catalyses the reaction 3-phosphoshikimate + phosphoenolpyruvate = 5-O-(1-carboxyvinyl)-3-phosphoshikimate + phosphate. It functions in the pathway metabolic intermediate biosynthesis; chorismate biosynthesis; chorismate from D-erythrose 4-phosphate and phosphoenolpyruvate: step 6/7. Functionally, catalyzes the transfer of the enolpyruvyl moiety of phosphoenolpyruvate (PEP) to the 5-hydroxyl of shikimate-3-phosphate (S3P) to produce enolpyruvyl shikimate-3-phosphate and inorganic phosphate. This is 3-phosphoshikimate 1-carboxyvinyltransferase from Legionella pneumophila (strain Paris).